Reading from the N-terminus, the 217-residue chain is tRNA (guanine-N(7)-)-methyltransferase (217 aa).

4 residues coordinate S-adenosyl-L-methionine: Glu-43, Asp-68, Asn-101, and Asn-123. Lys-127 contacts substrate. The interaction with RNA stretch occupies residues 129-134 (RHNKRR). Residues Asp-159 and 196–199 (TEYE) contribute to the substrate site.

It belongs to the class I-like SAM-binding methyltransferase superfamily. TrmB family.

It catalyses the reaction guanosine(46) in tRNA + S-adenosyl-L-methionine = N(7)-methylguanosine(46) in tRNA + S-adenosyl-L-homocysteine. It functions in the pathway tRNA modification; N(7)-methylguanine-tRNA biosynthesis. In terms of biological role, catalyzes the formation of N(7)-methylguanine at position 46 (m7G46) in tRNA. In Clostridium botulinum (strain 657 / Type Ba4), this protein is tRNA (guanine-N(7)-)-methyltransferase.